Here is a 783-residue protein sequence, read N- to C-terminus: Aconitate hydratase, mitochondrial (783 aa).

The N-terminal 25 residues, 1–25, are a transit peptide targeting the mitochondrion; it reads MITTRLARMGALAPKSRLLFGTRGM. Substrate-binding positions include Gln-102 and 195-197; that span reads DSH. The [4Fe-4S] cluster site is built by Cys-388, Cys-451, and Cys-454. Substrate contacts are provided by Arg-477 and Arg-482. The interval 524–555 is disordered; that stretch reads EFKLKAPTGDGLPSRGYDPGRDTYQAPPTDRS. Residues Arg-610 and 673-674 each bind substrate; that span reads SR.

The protein belongs to the aconitase/IPM isomerase family. [4Fe-4S] cluster is required as a cofactor.

The protein resides in the mitochondrion. The catalysed reaction is citrate = D-threo-isocitrate. The enzyme catalyses (2R)-homocitrate = cis-homoaconitate + H2O. The protein operates within carbohydrate metabolism; tricarboxylic acid cycle; isocitrate from oxaloacetate: step 2/2. It functions in the pathway amino-acid biosynthesis; L-lysine biosynthesis via AAA pathway; L-alpha-aminoadipate from 2-oxoglutarate: step 2/5. Catalyzes the isomerization of citrate to isocitrate via cis-aconitate, a step in the citric acid cycle. Also catalyzes the reversible dehydration of (R)-homocitrate to cis-homoaconitate, a step in the alpha-aminoadipate pathway for lysine biosynthesis. This chain is Aconitate hydratase, mitochondrial (acoA), found in Emericella nidulans (strain FGSC A4 / ATCC 38163 / CBS 112.46 / NRRL 194 / M139) (Aspergillus nidulans).